The primary structure comprises 314 residues: tRNA-cytidine(32) 2-sulfurtransferase (314 aa).

Residues 46-51 carry the PP-loop motif motif; it reads SGGKDS. Positions 121, 124, and 212 each coordinate [4Fe-4S] cluster.

This sequence belongs to the TtcA family. In terms of assembly, homodimer. Requires Mg(2+) as cofactor. [4Fe-4S] cluster serves as cofactor.

Its subcellular location is the cytoplasm. It catalyses the reaction cytidine(32) in tRNA + S-sulfanyl-L-cysteinyl-[cysteine desulfurase] + AH2 + ATP = 2-thiocytidine(32) in tRNA + L-cysteinyl-[cysteine desulfurase] + A + AMP + diphosphate + H(+). It functions in the pathway tRNA modification. Its function is as follows. Catalyzes the ATP-dependent 2-thiolation of cytidine in position 32 of tRNA, to form 2-thiocytidine (s(2)C32). The sulfur atoms are provided by the cysteine/cysteine desulfurase (IscS) system. This is tRNA-cytidine(32) 2-sulfurtransferase from Nitrosomonas europaea (strain ATCC 19718 / CIP 103999 / KCTC 2705 / NBRC 14298).